The primary structure comprises 449 residues: Probable ubiquitin carboxyl-terminal hydrolase 8 (449 aa).

A UBP-type zinc finger spans residues 6–113; that stretch reads EGCQHLKLKP…FKIKNIKAWQ (108 aa). Cys-8, His-10, Cys-38, Cys-41, Cys-51, Cys-54, Cys-59, His-64, His-68, His-74, Cys-87, and Cys-90 together coordinate Zn(2+). Residues 145–435 form the USP domain; that stretch reads RGIQNLGATC…QAYLLFYHER (291 aa). The Nucleophile role is filled by Cys-154. Residues His-178, Cys-183, Cys-188, Cys-191, His-246, Cys-257, Cys-259, His-262, Cys-275, Cys-278, Cys-317, and Cys-320 each coordinate Zn(2+). The active-site Proton acceptor is His-395.

This sequence belongs to the peptidase C19 family. UBP8 subfamily. In terms of assembly, component of the 1.8 MDa SAGA (Spt-Ada-Gcn5 acetyltransferase) complex, which is composed of 19 subunits tra1, spt7, taf5, ngg1/ada3, sgf73, spt20, spt8, taf12, taf6, hfi1/ada1, ubp8, gcn5, ada2, spt3, sgf29, taf10, taf9, sgf11 and sus1. The SAGA complex is composed of 4 modules, namely the HAT (histone acetyltransferase) module (gcn5, ada2, ngg1/ada3 and sgf29), the DUB (deubiquitinating) module (ubp8, sgf11, sgf73 and sus1), the core or TAF (TBP-associated factor) module (taf5, taf6, taf9, taf10 and taf12), and the Tra1 or SPT (Suppressor of Ty) module (tra1, hfi1/ada1, spt3, spt7, spt8 and spt20). The Tra1/SPT module binds activators, the core module recruits TBP (TATA-binding protein), the HAT module contains the histone H3 acetyltransferase gcn5, and the DUB module comprises the histone H2B deubiquitinase ubp8.

It localises to the nucleus. The protein resides in the nucleoplasm. The catalysed reaction is Thiol-dependent hydrolysis of ester, thioester, amide, peptide and isopeptide bonds formed by the C-terminal Gly of ubiquitin (a 76-residue protein attached to proteins as an intracellular targeting signal).. Functionally, histone deubiquitinating enzyme component of the transcription coactivator SAGA complex. SAGA acts as a general cofactor required for essentially all RNA polymerase II transcription. At the promoters, SAGA is required for transcription pre-initiation complex (PIC) recruitment. It influences RNA polymerase II transcriptional activity through different activities such as TBP interaction (via core/TAF module) and promoter selectivity, interaction with transcription activators (via Tra1/SPT module), and chromatin modification through histone acetylation (via HAT module) and deubiquitination (via DUB module). SAGA preferentially acetylates histones H3 (to form H3K9ac, H3K14ac, H3K18ac and H3K23ac) and H2B and deubiquitinates histone H2B. SAGA interacts with DNA via upstream activating sequences (UASs). Within the DUB module, the correctly positioned zinc finger domains of sgf11 and sgf73 are both required to fully activate the ubiquitin hydrolase ubp8. The DUB module is also linked to the splicing efficiency of many transcripts. This Schizosaccharomyces pombe (strain 972 / ATCC 24843) (Fission yeast) protein is Probable ubiquitin carboxyl-terminal hydrolase 8 (ubp8).